We begin with the raw amino-acid sequence, 346 residues long: UDP-N-acetylenolpyruvoylglucosamine reductase (346 aa).

One can recognise an FAD-binding PCMH-type domain in the interval 23 to 194 (FDVRARLACR…VSVTFRLPKV (172 aa)). Residue arginine 170 is part of the active site. The active-site Proton donor is serine 246. Glutamate 342 is an active-site residue.

The protein belongs to the MurB family. FAD serves as cofactor.

The protein localises to the cytoplasm. It catalyses the reaction UDP-N-acetyl-alpha-D-muramate + NADP(+) = UDP-N-acetyl-3-O-(1-carboxyvinyl)-alpha-D-glucosamine + NADPH + H(+). It participates in cell wall biogenesis; peptidoglycan biosynthesis. Its function is as follows. Cell wall formation. The sequence is that of UDP-N-acetylenolpyruvoylglucosamine reductase from Paraburkholderia phymatum (strain DSM 17167 / CIP 108236 / LMG 21445 / STM815) (Burkholderia phymatum).